The sequence spans 158 residues: NAD(P)H-quinone oxidoreductase subunit N (158 aa).

This sequence belongs to the complex I NdhN subunit family. As to quaternary structure, NDH-1 can be composed of about 15 different subunits; different subcomplexes with different compositions have been identified which probably have different functions.

The protein resides in the cellular thylakoid membrane. It carries out the reaction a plastoquinone + NADH + (n+1) H(+)(in) = a plastoquinol + NAD(+) + n H(+)(out). The catalysed reaction is a plastoquinone + NADPH + (n+1) H(+)(in) = a plastoquinol + NADP(+) + n H(+)(out). NDH-1 shuttles electrons from an unknown electron donor, via FMN and iron-sulfur (Fe-S) centers, to quinones in the respiratory and/or the photosynthetic chain. The immediate electron acceptor for the enzyme in this species is believed to be plastoquinone. Couples the redox reaction to proton translocation, and thus conserves the redox energy in a proton gradient. Cyanobacterial NDH-1 also plays a role in inorganic carbon-concentration. This is NAD(P)H-quinone oxidoreductase subunit N from Nostoc punctiforme (strain ATCC 29133 / PCC 73102).